The sequence spans 235 residues: Orotidine 5'-phosphate decarboxylase (235 aa).

Substrate contacts are provided by residues Asp10, Lys33, 60–69, Thr123, Arg185, Gln194, Gly214, and Arg215; that span reads DLKMSDIPNT. The active-site Proton donor is Lys62.

It belongs to the OMP decarboxylase family. Type 1 subfamily. In terms of assembly, homodimer.

It carries out the reaction orotidine 5'-phosphate + H(+) = UMP + CO2. Its pathway is pyrimidine metabolism; UMP biosynthesis via de novo pathway; UMP from orotate: step 2/2. Its function is as follows. Catalyzes the decarboxylation of orotidine 5'-monophosphate (OMP) to uridine 5'-monophosphate (UMP). This chain is Orotidine 5'-phosphate decarboxylase, found in Lactobacillus gasseri (strain ATCC 33323 / DSM 20243 / BCRC 14619 / CIP 102991 / JCM 1131 / KCTC 3163 / NCIMB 11718 / NCTC 13722 / AM63).